The chain runs to 930 residues: Protein translocase subunit SecA (930 aa).

Residues Gln-87, 105-109 (GEGKT), and Asp-516 each bind ATP. Residues Cys-914, Cys-916, Cys-925, and His-926 each contribute to the Zn(2+) site.

Belongs to the SecA family. As to quaternary structure, monomer and homodimer. Part of the essential Sec protein translocation apparatus which comprises SecA, SecYEG and auxiliary proteins SecDF-YajC and YidC. Zn(2+) is required as a cofactor.

The protein resides in the cell inner membrane. It is found in the cytoplasm. The catalysed reaction is ATP + H2O + cellular proteinSide 1 = ADP + phosphate + cellular proteinSide 2.. In terms of biological role, part of the Sec protein translocase complex. Interacts with the SecYEG preprotein conducting channel. Has a central role in coupling the hydrolysis of ATP to the transfer of proteins into and across the cell membrane, serving both as a receptor for the preprotein-SecB complex and as an ATP-driven molecular motor driving the stepwise translocation of polypeptide chains across the membrane. The sequence is that of Protein translocase subunit SecA from Variovorax paradoxus (strain S110).